The following is a 212-amino-acid chain: Nitric oxide synthase (212 aa).

Tyrosine 11 contributes to the heme b binding site. The segment at 30 to 50 (KKRAIGFKKLAKAVKFSTKLM) is calmodulin-binding. The Flavodoxin-like domain occupies 60-212 (ATILYATETG…AVDTLLEELG (153 aa)). Residues 155 to 175 (SYSDSRKSSSDEPEHKDNFES) form a disordered region. The span at 158–173 (DSRKSSSDEPEHKDNF) shows a compositional bias: basic and acidic residues. 186–212 (AFGLGSRAYPHFCAFARAVDTLLEELG) is a binding site for FMN.

This sequence belongs to the NOS family. Heme b is required as a cofactor. The cofactor is FAD. Requires FMN as cofactor.

It catalyses the reaction 2 L-arginine + 3 NADPH + 4 O2 + H(+) = 2 L-citrulline + 2 nitric oxide + 3 NADP(+) + 4 H2O. In terms of biological role, produces nitric oxide (NO) which is a messenger molecule with diverse functions throughout the body. The sequence is that of Nitric oxide synthase from Squalus acanthias (Spiny dogfish).